A 180-amino-acid chain; its full sequence is Nucleoside triphosphate/diphosphate phosphatase (180 aa).

The active-site Proton donor is arginine 26. Mg(2+) contacts are provided by asparagine 90, aspartate 106, aspartate 108, aspartate 110, aspartate 123, and glutamate 126.

This sequence belongs to the Ntdp family. It depends on Mg(2+) as a cofactor.

It catalyses the reaction a ribonucleoside 5'-triphosphate + H2O = a ribonucleoside 5'-diphosphate + phosphate + H(+). It carries out the reaction a ribonucleoside 5'-diphosphate + H2O = a ribonucleoside 5'-phosphate + phosphate + H(+). Has nucleoside phosphatase activity towards nucleoside triphosphates and nucleoside diphosphates. The chain is Nucleoside triphosphate/diphosphate phosphatase from Staphylococcus epidermidis (strain ATCC 35984 / DSM 28319 / BCRC 17069 / CCUG 31568 / BM 3577 / RP62A).